Here is a 199-residue protein sequence, read N- to C-terminus: Inner membrane-spanning protein YciB (199 aa).

Helical transmembrane passes span 3 to 23 (LLID…WGIY), 47 to 67 (VEPM…ATLL), 76 to 96 (WKPS…QLVF), 119 to 139 (LNWS…VIAY), and 149 to 169 (FKLF…AIYM). Residues 180 to 199 (AAAATPDALPPPGVQQDKQP) form a disordered region.

Belongs to the YciB family.

It is found in the cell inner membrane. Plays a role in cell envelope biogenesis, maintenance of cell envelope integrity and membrane homeostasis. The sequence is that of Inner membrane-spanning protein YciB from Delftia acidovorans (strain DSM 14801 / SPH-1).